Reading from the N-terminus, the 364-residue chain is Protein L-Myc (364 aa).

Disordered stretches follow at residues 41–81 (TSPP…HSKG), 111–172 (DRLA…EIDV), and 219–285 (PPES…KRKN). The span at 228–245 (ASERGPQEEVLERDAAGE) shows a compositional bias: basic and acidic residues. Positions 281–333 (TKRKNHNFLERKRRNDLRSRFLALRDQVPTLASCSKAPKVVILSKALEYLQAL) constitute a bHLH domain. The segment at 333 to 361 (LVGAEKRMATEKRQLRCRQQQLQKRIAYL) is leucine-zipper.

In terms of assembly, efficient DNA binding requires dimerization with another bHLH protein. Binds DNA as a heterodimer with MAX.

The protein resides in the nucleus. In Homo sapiens (Human), this protein is Protein L-Myc (MYCL).